A 345-amino-acid polypeptide reads, in one-letter code: Phosphate acyltransferase (345 aa).

Belongs to the PlsX family. Homodimer. Probably interacts with PlsY.

It localises to the cytoplasm. It catalyses the reaction a fatty acyl-[ACP] + phosphate = an acyl phosphate + holo-[ACP]. The protein operates within lipid metabolism; phospholipid metabolism. Catalyzes the reversible formation of acyl-phosphate (acyl-PO(4)) from acyl-[acyl-carrier-protein] (acyl-ACP). This enzyme utilizes acyl-ACP as fatty acyl donor, but not acyl-CoA. This Wolbachia pipientis wMel protein is Phosphate acyltransferase.